The primary structure comprises 151 residues: Protein ripply1 (151 aa).

The short motif at 57 to 60 (WRPW) is the WRPW motif element. The interval 96-131 (HPVRLFWPKSRSFDYLYSAGEILLQNFPVQATINLY) is ripply homology domain. The interval 130–151 (LYEDSDSEEEEEDEEQEDEEEK) is disordered. Residues 132-151 (EDSDSEEEEEDEEQEDEEEK) show a composition bias toward acidic residues.

Belongs to the ripply family.

It is found in the nucleus. Plays a role in somitogenesis. Essential for transcriptional repression of the segmental patterning genes, thus terminating the segmentation program in the presomitic mesoderm, and also required for the maintenance of rostrocaudal polarity in somites. This is Protein ripply1 from Homo sapiens (Human).